The following is a 158-amino-acid chain: 2-C-methyl-D-erythritol 2,4-cyclodiphosphate synthase (158 aa).

A divalent metal cation contacts are provided by Asp8 and His10. 4-CDP-2-C-methyl-D-erythritol 2-phosphate is bound by residues 8–10 (DVH) and 34–35 (HS). His42 provides a ligand contact to a divalent metal cation. 4-CDP-2-C-methyl-D-erythritol 2-phosphate contacts are provided by residues 56 to 58 (DIG), 61 to 65 (FPDDD), 132 to 135 (TTFE), and Phe139.

The protein belongs to the IspF family. In terms of assembly, homotrimer. A divalent metal cation serves as cofactor.

It carries out the reaction 4-CDP-2-C-methyl-D-erythritol 2-phosphate = 2-C-methyl-D-erythritol 2,4-cyclic diphosphate + CMP. Its pathway is isoprenoid biosynthesis; isopentenyl diphosphate biosynthesis via DXP pathway; isopentenyl diphosphate from 1-deoxy-D-xylulose 5-phosphate: step 4/6. In terms of biological role, involved in the biosynthesis of isopentenyl diphosphate (IPP) and dimethylallyl diphosphate (DMAPP), two major building blocks of isoprenoid compounds. Catalyzes the conversion of 4-diphosphocytidyl-2-C-methyl-D-erythritol 2-phosphate (CDP-ME2P) to 2-C-methyl-D-erythritol 2,4-cyclodiphosphate (ME-CPP) with a corresponding release of cytidine 5-monophosphate (CMP). In Natranaerobius thermophilus (strain ATCC BAA-1301 / DSM 18059 / JW/NM-WN-LF), this protein is 2-C-methyl-D-erythritol 2,4-cyclodiphosphate synthase.